Reading from the N-terminus, the 160-residue chain is 2-amino-4-hydroxy-6-hydroxymethyldihydropteridine pyrophosphokinase (160 aa).

The protein belongs to the HPPK family.

It carries out the reaction 6-hydroxymethyl-7,8-dihydropterin + ATP = (7,8-dihydropterin-6-yl)methyl diphosphate + AMP + H(+). It participates in cofactor biosynthesis; tetrahydrofolate biosynthesis; 2-amino-4-hydroxy-6-hydroxymethyl-7,8-dihydropteridine diphosphate from 7,8-dihydroneopterin triphosphate: step 4/4. Functionally, catalyzes the transfer of pyrophosphate from adenosine triphosphate (ATP) to 6-hydroxymethyl-7,8-dihydropterin, an enzymatic step in folate biosynthesis pathway. The sequence is that of 2-amino-4-hydroxy-6-hydroxymethyldihydropteridine pyrophosphokinase (folK) from Aquifex aeolicus (strain VF5).